The chain runs to 787 residues: Replication origin-binding protein (787 aa).

The Helicase ATP-binding domain occupies 39 to 195 (HFKTFSEQIK…SLCMPHFKSA (157 aa)). 52 to 59 (APMGSGKT) lines the ATP pocket.

It belongs to the herpesviridae OriBP family.

Its function is as follows. Probably involved in DNA replication. Binds the origin of replication (ori). The polypeptide is Replication origin-binding protein (U73) (Human herpesvirus 7 (strain JI) (HHV-7)).